A 271-amino-acid chain; its full sequence is Zinc-finger homeodomain protein 8 (271 aa).

At Ser16 the chain carries Phosphoserine. Residues 56 to 107 (YKECLKNHAAGIGGHALDGCGEFMPSPSFNSNDPASLTCAACGCHRNFHRRE) form a ZF-HD dimerization-type; degenerate zinc finger. The tract at residues 125–154 (HNRHQLPPPPPPHLAGIRSPDDDDSASPPP) is disordered. The homeobox DNA-binding region spans 179–242 (RKRFRTKFSQ…NNKISGRSGA (64 aa)).

In terms of assembly, homo- and heterodimer with other ZFHD proteins. Interacts with MIF1, MIF2 and MIF3; these interactions prevent nuclear localization and DNA-binding to inhibit transcription regulation activity. Binds to ZHD1, ZHD2, ZHD4, ZHD10 and ZHD11. Interacts with HIPP30. As to expression, mostly expressed in flowers and inflorescence.

It localises to the nucleus. In terms of biological role, putative transcription factor. The sequence is that of Zinc-finger homeodomain protein 8 (ZHD8) from Arabidopsis thaliana (Mouse-ear cress).